Consider the following 207-residue polypeptide: MLYVVDHPLIKHKLTIMRKKETGPKEFRELLREITLLITYEATRHIPVYELEVETPLEKTKGYYINDKDIVVIPILRAGLGMVDGILELLPNASVGHIGIYRDPETLKAVDYYFKTPKLHDKSEIFILDPMLATGVSAIDAITKVKELGGKQITFISLISSPEGVKAIEKAHPDVNIYTASLDRELNDHGYILPGLGDAGDRLFRTK.

5-phospho-alpha-D-ribose 1-diphosphate-binding positions include arginine 77, arginine 102, and 129 to 137 (DPMLATGVS). Uracil-binding positions include isoleucine 192 and 197–199 (GDA). Position 198 (aspartate 198) interacts with 5-phospho-alpha-D-ribose 1-diphosphate.

The protein belongs to the UPRTase family. Requires Mg(2+) as cofactor.

It catalyses the reaction UMP + diphosphate = 5-phospho-alpha-D-ribose 1-diphosphate + uracil. It functions in the pathway pyrimidine metabolism; UMP biosynthesis via salvage pathway; UMP from uracil: step 1/1. Allosterically activated by GTP. Its function is as follows. Catalyzes the conversion of uracil and 5-phospho-alpha-D-ribose 1-diphosphate (PRPP) to UMP and diphosphate. The protein is Uracil phosphoribosyltransferase of Fervidobacterium nodosum (strain ATCC 35602 / DSM 5306 / Rt17-B1).